The chain runs to 234 residues: Sugar fermentation stimulation protein homolog (234 aa).

It belongs to the SfsA family.

The sequence is that of Sugar fermentation stimulation protein homolog from Bartonella quintana (strain Toulouse) (Rochalimaea quintana).